The following is a 440-amino-acid chain: Trigger factor (440 aa).

The PPIase FKBP-type domain maps to 163–248; the sequence is GDTVNIDFDG…INEIKYKNVP (86 aa).

It belongs to the FKBP-type PPIase family. Tig subfamily.

It localises to the cytoplasm. It carries out the reaction [protein]-peptidylproline (omega=180) = [protein]-peptidylproline (omega=0). Functionally, involved in protein export. Acts as a chaperone by maintaining the newly synthesized protein in an open conformation. Functions as a peptidyl-prolyl cis-trans isomerase. The chain is Trigger factor from Staphylococcus carnosus (strain TM300).